We begin with the raw amino-acid sequence, 898 residues long: Magnesium-transporting ATPase, P-type 1 (898 aa).

Topologically, residues 1-94 are cytoplasmic; sequence MFKEIFTRLI…QPSPWWVHLW (94 aa). A helical transmembrane segment spans residues 95-115; the sequence is VCYRNPFNILLTILGAISYAT. Residue E116 is a topological domain, extracellular. A helical transmembrane segment spans residues 117–137; it reads DLFAAGVIALMVAISTLLNFI. Over 138–287 the chain is Cytoplasmic; that stretch reads QEARSTKAAD…PNAFQQGISR (150 aa). Residues 288–308 traverse the membrane as a helical segment; sequence VSMLLIRFMLVMAPVVLLING. Residues 309–317 are Extracellular-facing; it reads YTKGDWWEA. Residues 318–335 traverse the membrane as a helical segment; the sequence is ALFALSVAVGLTPEMLPM. E331 serves as a coordination point for Mg(2+). Over 336–695 the chain is Cytoplasmic; that stretch reads IVTSTLARGA…IEGRRTFANM (360 aa). D373 serves as the catalytic 4-aspartylphosphate intermediate. Residues D641, D645, and N709 each contribute to the Mg(2+) site. A helical transmembrane segment spans residues 696–715; the sequence is LKYIKMTASSNFGNVFSVLV. At 716–724 the chain is on the extracellular side; that stretch reads ASAFLPFLP. The chain crosses the membrane as a helical span at residues 725–744; sequence MLPLHLLIQNLLYDVSQVAI. N734 and D738 together coordinate Mg(2+). Residues 745 to 766 are Cytoplasmic-facing; that stretch reads PFDNVDDEQIQKPQRWNPADLG. The chain crosses the membrane as a helical span at residues 767–790; it reads RFMIFFGPISSIFDILTFCLMWWV. Topologically, residues 791 to 799 are extracellular; sequence FHANTPETQ. A helical transmembrane segment spans residues 800 to 818; sequence TLFQSGWFVVGLLSQTLIV. Residues 819 to 831 are Cytoplasmic-facing; it reads HMIRTRRVPFIQS. The helical transmembrane segment at 832–851 threads the bilayer; it reads CASWPLMIMTVIVMIVGIAL. Over 852-866 the chain is Extracellular; the sequence is PFSPLASYLQLQALP. The chain crosses the membrane as a helical span at residues 867-886; that stretch reads LSYFPWLVAILAGYMTLTQL. Residues 887–898 are Cytoplasmic-facing; sequence VKGFYSRRYGWQ.

It belongs to the cation transport ATPase (P-type) (TC 3.A.3) family. Type IIIB subfamily.

The protein localises to the cell inner membrane. The catalysed reaction is Mg(2+)(out) + ATP + H2O = Mg(2+)(in) + ADP + phosphate + H(+). Functionally, mediates magnesium influx to the cytosol. The sequence is that of Magnesium-transporting ATPase, P-type 1 (mgtA) from Escherichia coli O157:H7.